A 445-amino-acid polypeptide reads, in one-letter code: MSSDADAHKVGLIPVTLMVSGNIMGSGVFLLPANLAATGGIAIYGWLVTIIGALALSMVYAKMSSLDPSPGGSYAYARRCFGPFLGYQTNVLYWLACWIGNIAMVVIGVGYLSYFFPILKDPLVLTLTCVAVLWIFVLLNIVGPKMITRVQAVATVLALVPIVGIAVFGWFWFKGETYMAAWNVSGMNTFGAIQSTLNVTLWSFIGVESASVAAGVVKNPKRNVPIATIGGVLIAAVCYVLSTTAIMGMIPNAALRVSASPFGDAARMALGDTAGAIVSFCAAAGCLGSLGGWTLLAGQTAKAAADDGLFPPIFARVNKAGTPVAGLLIVGVLMTIFQFSSMSPNAAKEFGLVSSVSVIFTLVPYLYTCAALLLLGHGHFGKARPLYLLITFVAFVYCIWAVIGSGAKEVMWSFVTLMVITALYALNYNRIHKNPYPLDAPVKQD.

Residues 1–9 lie on the Cytoplasmic side of the membrane; sequence MSSDADAHK. Residues 10–30 form a helical membrane-spanning segment; that stretch reads VGLIPVTLMVSGNIMGSGVFL. I23 is an agmatine binding site. L-arginine contacts are provided by I23 and S26. At 31-38 the chain is on the periplasmic side; that stretch reads LPANLAAT. A helical transmembrane segment spans residues 39-59; that stretch reads GGIAIYGWLVTIIGALALSMV. Topologically, residues 60 to 98 are cytoplasmic; the sequence is YAKMSSLDPSPGGSYAYARRCFGPFLGYQTNVLYWLACW. The agmatine site is built by A96, C97, and N101. A96 serves as a coordination point for L-arginine. A helical membrane pass occupies residues 99-119; sequence IGNIAMVVIGVGYLSYFFPIL. Residues 120 to 122 are Periplasmic-facing; the sequence is KDP. Residues 123–143 traverse the membrane as a helical segment; that stretch reads LVLTLTCVAVLWIFVLLNIVG. The Cytoplasmic segment spans residues 144-152; the sequence is PKMITRVQA. Residues 153–173 traverse the membrane as a helical segment; that stretch reads VATVLALVPIVGIAVFGWFWF. Residues 174-196 are Periplasmic-facing; the sequence is KGETYMAAWNVSGMNTFGAIQST. Residues 197 to 217 traverse the membrane as a helical segment; it reads LNVTLWSFIGVESASVAAGVV. L-arginine-binding residues include W202 and I205. I205 is an agmatine binding site. Residues 218 to 225 lie on the Cytoplasmic side of the membrane; that stretch reads KNPKRNVP. A helical membrane pass occupies residues 226–246; the sequence is IATIGGVLIAAVCYVLSTTAI. The Periplasmic portion of the chain corresponds to 247–275; sequence MGMIPNAALRVSASPFGDAARMALGDTAG. The helical transmembrane segment at 276-296 threads the bilayer; it reads AIVSFCAAAGCLGSLGGWTLL. W293 contacts agmatine. Residues 297–319 lie on the Cytoplasmic side of the membrane; that stretch reads AGQTAKAAADDGLFPPIFARVNK. Residues 320–340 form a helical membrane-spanning segment; that stretch reads AGTPVAGLLIVGVLMTIFQFS. Topologically, residues 341-355 are periplasmic; it reads SMSPNAAKEFGLVSS. The helical transmembrane segment at 356 to 376 threads the bilayer; that stretch reads VSVIFTLVPYLYTCAALLLLG. S357 is an L-arginine binding site. Residues 377-385 lie on the Cytoplasmic side of the membrane; the sequence is HGHFGKARP. Residues 386–406 form a helical membrane-spanning segment; the sequence is LYLLITFVAFVYCIWAVIGSG. Residues 407-408 are Periplasmic-facing; the sequence is AK. Residues 409-429 traverse the membrane as a helical segment; that stretch reads EVMWSFVTLMVITALYALNYN. At 430 to 445 the chain is on the cytoplasmic side; that stretch reads RIHKNPYPLDAPVKQD.

Belongs to the amino acid-polyamine-organocation (APC) superfamily. Basic amino acid/polyamine antiporter (APA) (TC 2.A.3.2) family. In terms of assembly, homodimer; each subunit has its own individual transport capacity.

The protein resides in the cell inner membrane. The catalysed reaction is agmatine(in) + L-arginine(out) = agmatine(out) + L-arginine(in). Major component of the acid-resistance (AR) system allowing enteric pathogens to survive the acidic environment in the stomach. Exchanges extracellular arginine for its intracellular decarboxylation product agmatine (Agm) thereby expelling intracellular protons. Probably undergoes several conformational states in order to translocate the substrate across the membrane; keeps the substrate accessible to only 1 side of the membrane at a time by opening and closing 3 membrane-internal gates. This is Arginine/agmatine antiporter (adiC) from Salmonella typhi.